The sequence spans 451 residues: CBL-interacting protein kinase 22 (451 aa).

The Protein kinase domain maps to 26-301; the sequence is YELGRVLGQG…IGEIFDHPWL (276 aa). ATP contacts are provided by residues 32–40 and Lys-55; that span reads LGQGASSKV. Residue Asp-165 is the Proton acceptor of the active site. The interval 183–216 is activation loop; sequence DFGLSAFADADQHLGATDGLAATHCGSPAYVAPE. In terms of domain architecture, NAF spans 330-356; it reads ELEQAMELNAFDIIGFASGCDLSGLIG. The tract at residues 361–389 is PPI; it reads RVRFVLPGGDSKSVLDKVEKLGREEGLVV.

This sequence belongs to the protein kinase superfamily. CAMK Ser/Thr protein kinase family. SNF1 subfamily. Mn(2+) is required as a cofactor.

The catalysed reaction is L-seryl-[protein] + ATP = O-phospho-L-seryl-[protein] + ADP + H(+). It catalyses the reaction L-threonyl-[protein] + ATP = O-phospho-L-threonyl-[protein] + ADP + H(+). Functionally, CIPK serine-threonine protein kinases interact with CBL proteins. Binding of a CBL protein to the regulatory NAF domain of CIPK protein lead to the activation of the kinase in a calcium-dependent manner. This Oryza sativa subsp. japonica (Rice) protein is CBL-interacting protein kinase 22 (CIPK22).